The sequence spans 434 residues: Nicotinate phosphoribosyltransferase (434 aa).

His242 bears the Phosphohistidine; by autocatalysis mark.

This sequence belongs to the NAPRTase family. In terms of processing, transiently phosphorylated on a His residue during the reaction cycle. Phosphorylation strongly increases the affinity for substrates and increases the rate of nicotinate D-ribonucleotide production. Dephosphorylation regenerates the low-affinity form of the enzyme, leading to product release.

It carries out the reaction nicotinate + 5-phospho-alpha-D-ribose 1-diphosphate + ATP + H2O = nicotinate beta-D-ribonucleotide + ADP + phosphate + diphosphate. The protein operates within cofactor biosynthesis; NAD(+) biosynthesis; nicotinate D-ribonucleotide from nicotinate: step 1/1. In terms of biological role, catalyzes the synthesis of beta-nicotinate D-ribonucleotide from nicotinate and 5-phospho-D-ribose 1-phosphate at the expense of ATP. In Rhizobium rhizogenes (strain K84 / ATCC BAA-868) (Agrobacterium radiobacter), this protein is Nicotinate phosphoribosyltransferase.